The sequence spans 231 residues: NADH-ubiquinone oxidoreductase chain 4 (231 aa).

A run of 7 helical transmembrane segments spans residues 1 to 21, 34 to 54, 63 to 85, 89 to 111, 128 to 148, 169 to 189, and 211 to 231; these read PIAGSMVLAAILLKLGGYGII, MFLPFIVLALWGAILANLTCL, IAYSSVSHMGLVAAAIIIQTPWG, AMALMIAHGFTSSALFCLANTTY, ILPMTSTWWLLANLMNIATPP, TIILLGLSMLITASYSLHMFL, and LLMTLHLIPLMMISMKPELVI.

The protein belongs to the complex I subunit 4 family.

The protein resides in the mitochondrion membrane. It catalyses the reaction a ubiquinone + NADH + 5 H(+)(in) = a ubiquinol + NAD(+) + 4 H(+)(out). In terms of biological role, core subunit of the mitochondrial membrane respiratory chain NADH dehydrogenase (Complex I) that is believed to belong to the minimal assembly required for catalysis. Complex I functions in the transfer of electrons from NADH to the respiratory chain. The immediate electron acceptor for the enzyme is believed to be ubiquinone. In Porthidium ophryomegas (Slender hognose viper), this protein is NADH-ubiquinone oxidoreductase chain 4 (MT-ND4).